A 447-amino-acid polypeptide reads, in one-letter code: Tubulin beta-2 chain (447 aa).

Residues Q11, E69, S138, G142, T143, G144, N204, and N226 each contribute to the GTP site. E69 serves as a coordination point for Mg(2+). Residues 426–447 form a disordered region; that stretch reads QDAGVDEEEEEYEDDAPLEEEV. Residues 429–447 show a composition bias toward acidic residues; the sequence is GVDEEEEEYEDDAPLEEEV.

The protein belongs to the tubulin family. Dimer of alpha and beta chains. A typical microtubule is a hollow water-filled tube with an outer diameter of 25 nm and an inner diameter of 15 nM. Alpha-beta heterodimers associate head-to-tail to form protofilaments running lengthwise along the microtubule wall with the beta-tubulin subunit facing the microtubule plus end conferring a structural polarity. Microtubules usually have 13 protofilaments but different protofilament numbers can be found in some organisms and specialized cells. Mg(2+) is required as a cofactor.

The protein localises to the cytoplasm. It is found in the cytoskeleton. In terms of biological role, tubulin is the major constituent of microtubules, a cylinder consisting of laterally associated linear protofilaments composed of alpha- and beta-tubulin heterodimers. Microtubules grow by the addition of GTP-tubulin dimers to the microtubule end, where a stabilizing cap forms. Below the cap, tubulin dimers are in GDP-bound state, owing to GTPase activity of alpha-tubulin. The polypeptide is Tubulin beta-2 chain (TUB2) (Colletotrichum graminicola (Maize anthracnose fungus)).